The primary structure comprises 495 residues: Cyclic GMP-AMP synthase (495 aa).

The tract at residues 1 to 128 (MAARRGKSTR…AGATELAAPA (128 aa)) is disordered. Residues 1-134 (MAARRGKSTR…AAPARMEAPP (134 aa)) form a DNA-binding region. An N6-acetyllysine modification is found at K7. S13 carries the phosphoserine modification. Basic and acidic residues-rich tracts occupy residues 52-76 (CRRE…RAED) and 105-116 (RAREARSARELR). K56 is modified (N6-acetyllysine). Position 57 is a phosphoserine (S57). Residues 57 to 68 (SGPDPREKPQVR) are required for association with the cell membrane. The segment at 103–134 (SCRAREARSARELRPQAGATELAAPARMEAPP) is required for activation upon DNA viral infection. Residues 143-148 (LEKVRL) carry the Nuclear export signal motif. K145 carries the post-translational modification N6-lactoyllysine. The segment at 147 to 190 (RLSRHEISEAAEVVNWVVEHLLRRLQGGESEFKGVALLRTGSYY) is DNA-binding. At E165 the chain carries PolyADP-ribosyl glutamic acid. T186 serves as a coordination point for GTP. S188 is subject to Phosphoserine. S188 is an ATP binding site. A Phosphotyrosine modification is found at Y190. Mg(2+)-binding residues include E200 and D202. D202 is a 2',3'-cGAMP binding site. K206 is covalently cross-linked (Glycyl lysine isopeptide (Lys-Gly) (interchain with G-Cter in SUMO)). A Glycyl lysine isopeptide (Lys-Gly) (interchain with G-Cter in ubiquitin) cross-link involves residue K260. The residue at position 261 (E261) is a 5-glutamyl polyglutamate. The short motif at 268–278 (GVTVERKRRGS) is the Nuclear localization signal element. Residue S278 is modified to Phosphoserine. D294 contacts GTP. Position 294 (D294) interacts with Mg(2+). D294 provides a ligand contact to 2',3'-cGAMP. Positions 316–357 (SQWLGAKVKNNLKRQPFYLVPKHAKEGSGFQEETWRLSFSHI) are interaction with collided ribosomes. A Glycyl lysine isopeptide (Lys-Gly) (interchain with G-Cter in SUMO); alternate cross-link involves residue K322. Residue K322 forms a Glycyl lysine isopeptide (Lys-Gly) (interchain with G-Cter in ubiquitin); alternate linkage. 2 residues coordinate 2',3'-cGAMP: K337 and R351. 351–358 (RLSFSHIE) serves as a coordination point for GTP. An ATP-binding site is contributed by E358. N6-acetyllysine is present on K359. K359 participates in a covalent cross-link: Glycyl lysine isopeptide (Lys-Gly) (interchain with G-Cter in SUMO); alternate. K359 is covalently cross-linked (Glycyl lysine isopeptide (Lys-Gly) (interchain with G-Cter in ubiquitin); alternate). The DNA-binding stretch occupies residues 359-382 (KDILKNHGQSKTCCEIDGVKCCRK). H365 serves as a coordination point for Zn(2+). K369 carries the post-translational modification N6-acetyllysine. K369 participates in a covalent cross-link: Glycyl lysine isopeptide (Lys-Gly) (interchain with G-Cter in SUMO). The Zn(2+) site is built by C371, C372, and C379. S-palmitoyl cysteine attachment occurs at residues C379 and C380. Residues K386, K389, K396, and K397 each participate in a glycyl lysine isopeptide (Lys-Gly) (interchain with G-Cter in ubiquitin) cross-link. K389 is modified (N6-acetyllysine). K389 serves as a coordination point for ATP. At S410 the chain carries Phosphoserine. 410–414 (SYHVK) provides a ligand contact to ATP. Residue C449 is the site of S-palmitoyl cysteine attachment. K481 is modified (N6-methyllysine).

Belongs to the mab-21 family. As to quaternary structure, monomer in the absence of DNA. Homodimer in presence of dsDNA: forms a 2:2 dimer with two enzymes binding to two DNA molecules. Interacts with nucleosomes; interaction is mainly mediated via histones H2A and H2B and inactivates the nucleotidyltransferase activity by blocking DNA-binding and subsequent activation. Interacts with PQBP1 (via WW domain). Interacts with TRIM14; this interaction recruits USP14, leading to deubiquitinate and stabilize CGAS and promote type I interferon production. Interacts with ZCCHC3; promoting sensing of dsDNA by CGAS. Interacts (when not monomethylated) with (poly-ADP-ribosylated) PARP1; interaction takes place in the nucleus and prevents the formation of the PARP1-TIMELESS complex. Interacts (when monomethylated) with SGF29; interaction with SGF29 prevents interaction with PARP1. Interacts with PCBP2; preventing the formation of liquid-like droplets in which CGAS is activated. Interacts with IRGM; promoting CGAS degradation. Requires Mg(2+) as cofactor. The cofactor is Mn(2+). It depends on Zn(2+) as a cofactor. The N-terminal disordered part (1-134) is phosphorylated by AURKB during the G2-M transition, blocking CGAS liquid phase separation and preventing activation. Phosphorylation at Tyr-190 by BLK promotes cytosolic retention. Localizes into the nucleus following dephosphorylation at Tyr-190. Phosphorylation at Ser-410 activates the nucleotidyltransferase activity. Dephosphorylation at Ser-410 by PPP6C impairs its ability to bind GTP, thereby inactivating it. Phosphorylation at Ser-188 by PRKDC inhibits its cyclic GMP-AMP synthase activity by impairing homodimerization and activation. Phosphorylation at Ser-278 by AKT (AKT1, AKT2 or AKT3) suppresses the nucleotidyltransferase activity. Phosphorylation at Ser-278 by CDK1 during mitosis leads to its inhibition, thereby preventing CGAS activation by self-DNA during mitosis. Dephosphorylated at Ser-278 by protein phosphatase PP1 upon mitotic exit. Post-translationally, ubiquitinated at Lys-389 via 'Lys-48'-linked polyubiquitin chains, leading to its SQSTM1-mediated autophagic degradation. Interaction with TRIM14 promotes recruitment of USP14, leading to deubiquitinate Lys-389 and stabilize CGAS. Ubiquitinated at Lys-359 by RNF185 via 'Lys-27'-linked polyubiquitination, promoting CGAS cyclic GMP-AMP synthase activity. Monoubiquitination at Lys-322 by TRIM56 promotes oligomerization and subsequent activation. Monoubiquitination by TRIM41 promotes CGAS activation. Ubiquitination at Lys-260 via 'Lys-48'-linked polyubiquitination promotes its degradation. Deubiquitination at Lys-260 by USP29 promotes its stabilization. Deubiquitinated by USP27X, promoting its stabilization. Ubiquitinated at Lys-386 via 'Lys-63'-linked polyubiquitin chains by MARCHF8, leading to the inhibition of its DNA binding ability. In cycling cells, nucleosome-bound CGAS is ubiquitinated at Lys-396 and Lys-397 via 'Lys-48'-linked polyubiquitin chains by the ECS(SPSB3) complex, leading to its degradation: ubiquitination and degradation of nuclear CGAS during G1 and G2 phases is required to promote low intranuclear CGAS abundance before the next mitotic cycle. In terms of processing, sumoylated at Lys-206 by TRIM38 in uninfected cells and during the early phase of viral infection, promoting its stability by preventing ubiquitination at Lys-260 and subsequent degradation. Desumoylated by SENP2 during the late phase of viral infection. Sumoylation at Lys-322, Lys-359 and Lys-369 prevents DNA-binding, oligomerization and nucleotidyltransferase activity. Desumoylation at Lys-322, Lys-359 and Lys-369 by SENP7 relieves inhibition and activates CGAS. Polyglutamylated by TTLL6 at Glu-261, leading to impair DNA-binding activity. Deglutamylated by AGBL5/CCP5 and AGBL6/CCP6. Post-translationally, acetylation at Lys-359, Lys-369 and Lys-389 inhibits the cyclic GMP-AMP synthase activity. Deacetylated upon cytosolic DNA challenge such as viral infections. Acetylation by KAT5 increases the cyclic GMP-AMP synthase activity by promoting DNA-binding and subsequent activation. In terms of processing, proteolytically cleaved by apoptotic caspases during apoptosis, leading to its inactivation. The damage of the nucleus and the mitochondria during apoptosis leads to leakage of nuclear and mitochondrial DNA, which activate CGAS: cleavage and inactivation during apoptosis in required to prevent cytokine overproduction. Cleaved by CASP7 and CASP3 during virus-induced apoptosis, thereby inactivating it and preventing cytokine overproduction. Cleaved by CASP1 upon DNA virus infection; the cleavage impairs cGAMP production. Also cleaved by the pyroptotic CASP4 during non-canonical inflammasome activation; does not cut at the same sites than CASP1. Degraded via selective autophagy following interaction with IRGM. IRGM promotes CGAS recruitment to autophagosome membranes, promoting its SQSTM1/p62-dependent autophagic degradation. Post-translationally, poly-ADP-ribosylation at Glu-165 by PARP1 impairs DNA-binding, thereby preventing the cyclic GMP-AMP synthase activity. In terms of processing, palmitoylation at Cys-449 by ZDHHC18 impairs DNA-binding, thereby preventing the cyclic GMP-AMP synthase activity. Palmitoylation at Cys-379 and Cys-380 by ZDHHC9 promotes homodimerization and cyclic GMP-AMP synthase activity. Depalmitoylation at Cys-379 and Cys-380 by LYPLAL1 impairs homodimerization and cyclic GMP-AMP synthase activity. Monomethylated at Lys-481 by SETD7. Monomethylation promotes interaction with SGF29, preventing interaction between PARP1 nad SGF29. Demethylation by RIOX1 promotes interaction with PARP1, followed by PARP1 inactivation. Post-translationally, lactylation by AARS2 prevents ability to undergo liquid-liquid phase separation (LLPS), thereby inhibiting CGAS activation.

It localises to the nucleus. The protein localises to the chromosome. Its subcellular location is the cell membrane. It is found in the cytoplasm. The protein resides in the cytosol. The catalysed reaction is GTP + ATP = 2',3'-cGAMP + 2 diphosphate. It catalyses the reaction GTP + ATP = pppGp(2'-5')A + diphosphate. It carries out the reaction pppGp(2'-5')A = 2',3'-cGAMP + diphosphate. Its activity is regulated as follows. The enzyme activity is strongly increased by double-stranded DNA (dsDNA), but not by single-stranded DNA or RNA. DNA-binding induces the formation of liquid-like droplets in which CGAS is activated. Liquid-like droplets also create a selective environment that restricts entry of negative regulators, such as TREX1 or BANF1/BAF, allowing sensing of DNA. A number of mechanisms exist to restrict its activity toward self-DNA. The nucleotidyltransferase activity is inhibited in the nucleus via its association with nucleosomes: interacts with the acidic patch of histones H2A and H2B, thereby blocking DNA-binding and subsequent activation. CGAS is also inactive when associated with mitotic chromatin. Chromatin-bound CGAS cannot be activated by exogenous DNA in mitotic cells: phosphorylation of the N-terminal disordered part by AURKB during the G2-M transition blocks CGAS liquid phase separation and activation. Activity toward self-DNA is inhibited by BANF1/BAF upon acute loss of nuclear membrane integrity: BANF1/BAF acts by outcompeting CGAS for DNA-binding, thereby preventing CGAS activation. DNA-induced activation at micronuclei is also limited by TREX1, which degrades micronuclear DNA upon nuclear envelope rupture, thereby preventing CGAS activation. CGAS can be released from nucleosomes and activated by MRE11 component of the MRN complex, which displaces CGAS from acidic-patch-mediated sequestration. Acetylation at Lys-359, Lys-369 and Lys-389 inhibits the cyclic GMP-AMP synthase activity. Acetylation by KAT5 increases the cyclic GMP-AMP synthase activity by promoting DNA-binding and subsequent activation. Phosphorylation at Ser-278 suppresses the nucleotidyltransferase activity. Phosphorylation at Ser-410 promotes the cyclic GMP-AMP synthase activity. Phosphorylation at Ser-188 inhibits its cyclic GMP-AMP synthase activity. Ubiquitination at Lys-359 via 'Lys-27'-linked polyubiquitination enhances the cyclic GMP-AMP synthase activity. Monoubiquitination at Lys-322 promotes oligomerization and subsequent activation. Sumoylation at Lys-322, Lys-359 and Lys-369 prevents DNA-binding, oligomerization and nucleotidyltransferase activity. The enzyme activity is impaired by the cleavage by CASP1. In addition to DNA, also activated by collided ribosomes upon translation stress: specifically binds collided ribosomes, promoting its activation and triggering type-I interferon production. Functionally, nucleotidyltransferase that catalyzes the formation of cyclic GMP-AMP (2',3'-cGAMP) from ATP and GTP and plays a key role in innate immunity. Catalysis involves both the formation of a 2',5' phosphodiester linkage at the GpA step and the formation of a 3',5' phosphodiester linkage at the ApG step, producing c[G(2',5')pA(3',5')p]. Acts as a key DNA sensor: directly binds double-stranded DNA (dsDNA), inducing the formation of liquid-like droplets in which CGAS is activated, leading to synthesis of 2',3'-cGAMP, a second messenger that binds to and activates STING1, thereby triggering type-I interferon production. Preferentially binds long dsDNA (around 45 bp) and forms ladder-like networks that function cooperatively to stabilize individual cGAS-dsDNA complexes. Acts as a key foreign DNA sensor, the presence of double-stranded DNA (dsDNA) in the cytoplasm being a danger signal that triggers the immune responses. Has antiviral activity by sensing the presence of dsDNA from DNA viruses in the cytoplasm. Also acts as an innate immune sensor of infection by retroviruses by detecting the presence of reverse-transcribed DNA in the cytosol. Detection of retroviral reverse-transcribed DNA in the cytosol may be indirect and be mediated via interaction with PQBP1, which directly binds reverse-transcribed retroviral DNA. Also detects the presence of DNA from bacteria. 2',3'-cGAMP can be transferred from producing cells to neighboring cells through gap junctions, leading to promote STING1 activation and convey immune response to connecting cells. 2',3'-cGAMP can also be transferred between cells by virtue of packaging within viral particles contributing to IFN-induction in newly infected cells in a cGAS-independent but STING1-dependent manner. Also senses the presence of neutrophil extracellular traps (NETs) that are translocated to the cytosol following phagocytosis, leading to synthesis of 2',3'-cGAMP. In addition to foreign DNA, can also be activated by endogenous nuclear or mitochondrial DNA. When self-DNA leaks into the cytosol during cellular stress (such as mitochondrial stress, DNA damage, mitotic arrest or senescence), or is present in form of cytosolic micronuclei, CGAS is activated leading to a state of sterile inflammation. Acts as a regulator of cellular senescence by binding to cytosolic chromatin fragments that are present in senescent cells, leading to trigger type-I interferon production via STING1 and promote cellular senescence. Also involved in the inflammatory response to genome instability and double-stranded DNA breaks: acts by localizing to micronuclei arising from genome instability. Micronuclei, which are frequently found in cancer cells, consist of chromatin surrounded by their own nuclear membrane: following breakdown of the micronuclear envelope, a process associated with chromothripsis, CGAS binds self-DNA exposed to the cytosol, leading to 2',3'-cGAMP synthesis and subsequent activation of STING1 and type-I interferon production. In a healthy cell, CGAS is however kept inactive even in cellular events that directly expose it to self-DNA, such as mitosis, when cGAS associates with chromatin directly after nuclear envelope breakdown or remains in the form of postmitotic persistent nuclear cGAS pools bound to chromatin. Nuclear CGAS is inactivated by chromatin via direct interaction with nucleosomes, which block CGAS from DNA binding and thus prevent CGAS-induced autoimmunity. Also acts as a suppressor of DNA repair in response to DNA damage: inhibits homologous recombination repair by interacting with PARP1, the CGAS-PARP1 interaction leading to impede the formation of the PARP1-TIMELESS complex. In addition to DNA, also sense translation stress: in response to translation stress, translocates to the cytosol and associates with collided ribosomes, promoting its activation and triggering type-I interferon production. This chain is Cyclic GMP-AMP synthase, found in Sus scrofa (Pig).